Reading from the N-terminus, the 874-residue chain is MTISHIDPEYQANTIEPSVQQDWENRKVFKVADTVEGKHRYILSMFPYPSGKLHMGHVRNYTIGDVISRFYRLKGETVLQPMGWDAFGLPAENAAIAHKVAPAKWTFENIAYMRDQLKKLGLSVDWDREFATCTPEYYHWEQWLFVQLYKKGLIYRKLSTVNWDPVDQTVLANEQVENGRGWRSGALVEKRDIPMYYFRITDYAQELLDDLDTLQDGWPQQVLTMQRNWIGRSTGMEITFPSANTEIYADGLTVYTTRADTLMGVTYVAVAAEHPLALKAAENNPELAAFIEECRMGSVAEADLATAEKKGMATGLFVKHPVTGEELPVWIANYVLMSYGSGAVMAVPAHDERDFEFANKFNLPIKQVIDAKGADDADYSATEWQEWYGSKEGKLVNSGEFDGLEFQAAFDAFLAKLEPQGLANSKVQFRLRDWGVSRQRYWGCPIPMINCDTCGQVTVPEDQLPVVLPTDVVPDGSGNPLNKMPEFYETKCPCCGGDARRETDTLDTFVESSWYYARYASPDFTGGMVKPEAAKNWLPVNQYIGGVEHAILHLLYARFFHKLMRDEGVVQGNEPFTNLLTQGMVLADTFYREAENGKKTWFNPADIELERDEKGRIISAKYSGDGQEVIIGGQEKMSKSKNNGIDPQAIIDQYGADTARVFMMFAAPPDQSLEWSDAGVEGANRFLKRVWRLVASFLEKGNSATAIDKANLSKDAQDLRRKTHETIQKVSDDIERRHAFNTAIAALMELLNASNKFEAKDDNDVAVEREAITTLLTLLAPFAPHLSQTLLAQFGTDLTEATFPEVDASALTRNTQTIVVQVNGKLRGKLEVSVDISKDELLAQAKALPEVQQFLTGPTKKEIVVPNKLVNLVV.

The short motif at 47–57 is the 'HIGH' region element; sequence PYPSGKLHMGH. The short motif at 636 to 640 is the 'KMSKS' region element; that stretch reads KMSKS. K639 provides a ligand contact to ATP.

This sequence belongs to the class-I aminoacyl-tRNA synthetase family.

Its subcellular location is the cytoplasm. It carries out the reaction tRNA(Leu) + L-leucine + ATP = L-leucyl-tRNA(Leu) + AMP + diphosphate. The protein is Leucine--tRNA ligase of Acinetobacter baumannii (strain AB0057).